Here is a 342-residue protein sequence, read N- to C-terminus: Cell cycle control protein 50C (342 aa).

Residues 1–33 are Cytoplasmic-facing; that stretch reads MEMMPQYDLSRLPENTALKQQTLPTQQLNLSAS. Residues 34–54 form a helical membrane-spanning segment; sequence VVLSIFFITGGFCLSIGIILL. At 55–306 the chain is on the extracellular side; the sequence is LSAKSTKKIE…STLTWIGGGG (252 aa). N-linked (GlcNAc...) asparagine glycans are attached at residues Asn66, Asn80, Asn89, and Asn205. Residues 307-327 traverse the membrane as a helical segment; sequence LFLGLTYTVTGALTLLASFAI. The Cytoplasmic segment spans residues 328 to 342; the sequence is LTIHLMLKRSKLNFL.

It belongs to the CDC50/LEM3 family. In terms of tissue distribution, specifically expressed in testis.

It is found in the membrane. This Mus musculus (Mouse) protein is Cell cycle control protein 50C (Tmem30c).